The sequence spans 429 residues: Glutamate-1-semialdehyde 2,1-aminomutase (429 aa).

The residue at position 267 (K267) is an N6-(pyridoxal phosphate)lysine.

Belongs to the class-III pyridoxal-phosphate-dependent aminotransferase family. HemL subfamily. Homodimer. It depends on pyridoxal 5'-phosphate as a cofactor.

It is found in the cytoplasm. The enzyme catalyses (S)-4-amino-5-oxopentanoate = 5-aminolevulinate. It functions in the pathway porphyrin-containing compound metabolism; protoporphyrin-IX biosynthesis; 5-aminolevulinate from L-glutamyl-tRNA(Glu): step 2/2. The polypeptide is Glutamate-1-semialdehyde 2,1-aminomutase (Xanthomonas axonopodis pv. citri (strain 306)).